Reading from the N-terminus, the 447-residue chain is Gastrin/cholecystokinin type B receptor (447 aa).

Residues 1–57 (MELLKLNRSVQGTGPGPGASLCRPGAPLLNSSSVGNLSCEPPRIRGAGTRELELAIR) are Extracellular-facing. Asn-7, Asn-30, and Asn-36 each carry an N-linked (GlcNAc...) asparagine glycan. Residues 58 to 79 (ITLYAVIFLMSVGGNMLIIVVL) traverse the membrane as a helical segment. Over 80–87 (GLSRRLRT) the chain is Cytoplasmic. The chain crosses the membrane as a helical span at residues 88–109 (VTNAFLLSLAVSDLLLAVACMP). Residues 110 to 131 (FTLLPNLMGTFIFGTVICKAVS) lie on the Extracellular side of the membrane. An intrachain disulfide couples Cys-127 to Cys-205. The helical transmembrane segment at 132 to 150 (YLMGVSVSVSTLSLVAIAL) threads the bilayer. Residues 151 to 170 (ERYSAICRPLQARVWQTRSH) lie on the Cytoplasmic side of the membrane. The helical transmembrane segment at 171 to 189 (AARVIVATWLLSGLLMVPY) threads the bilayer. The Extracellular segment spans residues 190–219 (PVYTVVQPVGPRVLQCVHRWPSARVRQTWS). Residues 220-242 (VLLLLLLFFIPGVVMAVAYGLIS) form a helical membrane-spanning segment. At 243 to 333 (RELYLGLRFD…KLLAKKRVVR (91 aa)) the chain is on the cytoplasmic side. Positions 258-285 (DSQSRVRNQGGLPGAVHQNGRCRPETGA) are disordered. A helical membrane pass occupies residues 334–355 (MLLVIVVLFFLCWLPVYSANTW). Over 356 to 373 (RAFDGPGAHRALSGAPIS) the chain is Extracellular. A helical transmembrane segment spans residues 374-394 (FIHLLSYASACVNPLVYCFMH). The Cytoplasmic segment spans residues 395–447 (RRFRQACLETCARCCPRPPRARPRALPDEDPPTPSIASLSRLSYTTISTLGPG). Cys-408 carries the S-palmitoyl cysteine lipid modification.

Belongs to the G-protein coupled receptor 1 family. In terms of tissue distribution, isoform 1 is expressed in brain, pancreas, stomach, the colon cancer cell line LoVo and the T-lymphoblastoma Jurkat, but not in heart, placenta, liver, lung, skeletal muscle, kidney or the stomach cancer cell line AGS. Expressed at high levels in the small cell lung cancer cell line NCI-H510, at lower levels in NCI-H345, NCI-H69 and GLC-28 cell lines, not expressed in GLC-19 cell line. Within the stomach, expressed at high levels in the mucosa of the gastric fundus and at low levels in the antrum and duodenum. Isoform 2 is present in pancreatic cancer cells and colorectal cancer cells, but not in normal pancreas or colonic mucosa. Isoform 3 is expressed in brain, pancreas, stomach, the stomach cancer cell line AGS and the colon cancer cell line LoVo.

Its subcellular location is the cell membrane. Receptor for gastrin and cholecystokinin. The CCK-B receptors occur throughout the central nervous system where they modulate anxiety, analgesia, arousal, and neuroleptic activity. This receptor mediates its action by association with G proteins that activate a phosphatidylinositol-calcium second messenger system. Its function is as follows. Isoform 2 is constitutively activated and may regulate cancer cell proliferation via a gastrin-independent mechanism. This chain is Gastrin/cholecystokinin type B receptor, found in Homo sapiens (Human).